The sequence spans 237 residues: tRNA (guanine-N(1)-)-methyltransferase (237 aa).

S-adenosyl-L-methionine is bound by residues G115 and 134–139 (LGDFVL).

Belongs to the RNA methyltransferase TrmD family. In terms of assembly, homodimer.

The protein resides in the cytoplasm. The catalysed reaction is guanosine(37) in tRNA + S-adenosyl-L-methionine = N(1)-methylguanosine(37) in tRNA + S-adenosyl-L-homocysteine + H(+). Specifically methylates guanosine-37 in various tRNAs. This is tRNA (guanine-N(1)-)-methyltransferase from Synechococcus sp. (strain RCC307).